A 2844-amino-acid polypeptide reads, in one-letter code: Sodium channel protein 60E (2844 aa).

Residues Met1–Tyr121 lie on the Cytoplasmic side of the membrane. The I repeat unit spans residues Phe107–Lys434. A helical membrane pass occupies residues Ile122–Met145. Residues Thr146–Glu151 are Extracellular-facing. Residues Ala152–Gly172 form a helical membrane-spanning segment. The Cytoplasmic segment spans residues Phe173–Asn183. A helical transmembrane segment spans residues Pro184–Met202. At Glu203–Ala208 the chain is on the extracellular side. Residues Gly209 to Leu228 form a helical; Voltage-sensor membrane-spanning segment. Over Lys229 to Glu244 the chain is Cytoplasmic. A helical membrane pass occupies residues Val245–Met265. The Extracellular segment spans residues Gly266–Asn340. An intrachain disulfide couples Cys272 to Cys318. 3 N-linked (GlcNAc...) asparagine glycosylation sites follow: Asn282, Asn293, and Asn311. The pore-forming intramembrane region spans Phe341–Leu365. Residues Ala366–Ser374 are Extracellular-facing. A helical membrane pass occupies residues Phe375–Val395. Residues Ala396 to Asp687 lie on the Cytoplasmic side of the membrane. The interval Ala452–Val610 is disordered. Residues Ser455 to Lys465 are compositionally biased toward basic residues. Gly residues predominate over residues Glu469 to Ser479. 2 stretches are compositionally biased toward low complexity: residues Gln511–Glu520 and Ser577–Glu586. Positions Gly593 to Thr603 are enriched in acidic residues. Residues Cys668–Asn1130 form an II repeat. The chain crosses the membrane as a helical span at residues Pro688 to Glu708. Topologically, residues His709–Asn718 are extracellular. A helical transmembrane segment spans residues Ala719 to Ser743. At Lys744 to Cys749 the chain is on the cytoplasmic side. The chain crosses the membrane as a helical span at residues Gly750–Glu769. Residues Leu770–Ser775 lie on the Extracellular side of the membrane. The helical; Voltage-sensor transmembrane segment at Val776–Met795 threads the bilayer. The Cytoplasmic portion of the chain corresponds to Lys796–Gly810. Residues Asn811–Ser832 form a helical membrane-spanning segment. Topologically, residues Lys833–Asp852 are extracellular. The pore-forming intramembrane region spans Phe853 to Trp873. At Asp874 to Ala889 the chain is on the extracellular side. Cysteines 875 and 887 form a disulfide. A helical membrane pass occupies residues Ile890 to Leu910. Residues Leu911–Thr1742 are Cytoplasmic-facing. Over residues Tyr1129–Asn1157 the composition is skewed to polar residues. 5 disordered regions span residues Tyr1129–Glu1166, Tyr1185–Ser1224, Ile1268–Thr1288, Ala1577–Ser1630, and Leu1635–Lys1654. Over residues Arg1191 to Leu1203 the composition is skewed to low complexity. The segment covering Leu1204–Arg1213 has biased composition (basic and acidic residues). Polar residues-rich tracts occupy residues Pro1277–Asn1286, Pro1604–Arg1618, and Lys1640–Lys1654. Residues Pro1723–Lys2040 form an III repeat. The helical transmembrane segment at Ala1743–Ala1763 threads the bilayer. At Ser1764–Asn1789 the chain is on the extracellular side. N-linked (GlcNAc...) asparagine glycosylation is found at Asn1778 and Asn1789. A helical membrane pass occupies residues Phe1790–Ser1810. Over Lys1811–Phe1813 the chain is Cytoplasmic. A helical membrane pass occupies residues Thr1814–Ile1834. Topologically, residues Glu1835–Asn1839 are extracellular. Residues Leu1840–Trp1861 form a helical; Voltage-sensor membrane-spanning segment. At Gln1862–Asn1880 the chain is on the cytoplasmic side. Residues Val1881–Gly1902 traverse the membrane as a helical segment. Over Lys1903–Val1943 the chain is Extracellular. Asn1930 is a glycosylation site (N-linked (GlcNAc...) asparagine). Positions Gly1944–Asp1965 form an intramembrane region, pore-forming. Topologically, residues Ala1966 to Asn1981 are extracellular. A helical membrane pass occupies residues Leu1982–Leu2002. Residues Phe2003–Arg2069 are Cytoplasmic-facing. An IV repeat occupies Ile2050–Asn2311. A helical transmembrane segment spans residues Phe2070 to Tyr2090. At Asp2091–Ala2095 the chain is on the extracellular side. A helical membrane pass occupies residues Val2096–Ile2116. Residues Val2117–Asn2132 lie on the Cytoplasmic side of the membrane. The helical transmembrane segment at Val2133–Ile2153 threads the bilayer. The Extracellular segment spans residues Asp2154–Leu2162. Residues Arg2163–Arg2184 form a helical; Voltage-sensor membrane-spanning segment. Over Lys2185–Asn2199 the chain is Cytoplasmic. A helical membrane pass occupies residues Ile2200–Gly2220. Over Asn2221–Thr2236 the chain is Extracellular. An intramembrane region (pore-forming) is located at residues Phe2237–Ser2259. Residues Leu2260–Tyr2288 lie on the Extracellular side of the membrane. The helical transmembrane segment at Phe2289–Leu2309 threads the bilayer. Over Glu2310–Arg2844 the chain is Cytoplasmic. The region spanning Gln2441–Ser2470 is the IQ domain. Disordered stretches follow at residues Arg2457–Gly2479, Ser2584–Gln2668, Asp2780–Ile2802, and Asn2818–Arg2844. Residues Ser2467–Gly2479 are compositionally biased toward polar residues. Residues Ala2595–Ser2632 are compositionally biased toward low complexity. Residues Ser2647–Lys2658 show a composition bias toward basic residues. The span at Asp2825–Phe2836 shows a compositional bias: polar residues.

It belongs to the sodium channel (TC 1.A.1.10) family. NaCP60E subfamily. As to expression, in embryonic and larval stages, expression is limited to very few non-neuronal cells in either the CNS or PNS. In pupal and adult stages, expressed in cell bodies of the fly central nervous system, including optic lobes, central brain, subesophageal ganglion, thoracico-abdominal ganglion, major olfactory organs, the third antennal segment and the maxillary palps.

The protein resides in the cell membrane. Its function is as follows. Mediates the voltage-dependent sodium ion permeability of excitable membranes. Plays a role in processing of olfactory information during the olfactory avoidance response. The polypeptide is Sodium channel protein 60E (NaCP60E) (Drosophila melanogaster (Fruit fly)).